The primary structure comprises 862 residues: Putative cargo-transport protein ypp1 (862 aa).

3 TPR repeats span residues Q342–E377, S460–N493, and T494–Y527. A phosphoserine mark is found at S632, S633, and S637. 4 TPR repeats span residues I665–K698, Q705–C738, W740–D772, and P814–N847.

Belongs to the YPP1 family.

The protein resides in the cytoplasm. Its function is as follows. Involved in endocytosis. The sequence is that of Putative cargo-transport protein ypp1 (ypp1) from Schizosaccharomyces pombe (strain 972 / ATCC 24843) (Fission yeast).